Consider the following 523-residue polypeptide: NAD(P) transhydrogenase subunit alpha (523 aa).

Over 1 to 411 the chain is Cytoplasmic; that stretch reads MKIGAPREIF…AEIATFRKQT (411 aa). NAD(+) is bound by residues 127–130, V177, 197–199, and G229; these read QKMD and DVR. The next 2 helical transmembrane spans lie at 412 to 432 and 433 to 455; these read VSQV…GMYA and PPSF…QVIW. Residues 456-464 lie on the Cytoplasmic side of the membrane; the sequence is NVSHSLHTP. A helical transmembrane segment spans residues 465–485; that stretch reads LMAVTNAISGIVILGALLQIG. Over 486–489 the chain is Periplasmic; the sequence is SGNV. The chain crosses the membrane as a helical span at residues 490–510; that stretch reads LVVLLAAISVLIATINIVGGF. Residues 511–523 lie on the Cytoplasmic side of the membrane; it reads LVTRRMLAMFQKS.

Belongs to the AlaDH/PNT family. In terms of assembly, heterodimer of an alpha (PntA) and a beta (PntB) chain.

It is found in the cell inner membrane. It carries out the reaction NAD(+) + NADPH + H(+)(in) = NADH + NADP(+) + H(+)(out). Its function is as follows. The transhydrogenation between NADH and NADP is coupled to respiration and ATP hydrolysis and functions as a proton pump across the membrane. The polypeptide is NAD(P) transhydrogenase subunit alpha (Cereibacter sphaeroides (Rhodobacter sphaeroides)).